The primary structure comprises 130 residues: Small ribosomal subunit protein uS8 (130 aa).

The protein belongs to the universal ribosomal protein uS8 family. In terms of assembly, part of the 30S ribosomal subunit. Contacts proteins S5 and S12.

Functionally, one of the primary rRNA binding proteins, it binds directly to 16S rRNA central domain where it helps coordinate assembly of the platform of the 30S subunit. The chain is Small ribosomal subunit protein uS8 from Shigella boydii serotype 18 (strain CDC 3083-94 / BS512).